The sequence spans 1080 residues: Carbamoyl phosphate synthase large chain (1080 aa).

The segment at 1–403 (MPKRTDLRTI…SLQKAVRGLE (403 aa)) is carboxyphosphate synthetic domain. Arginine 129, arginine 169, glycine 175, glycine 176, glutamate 208, valine 210, glutamate 215, glycine 241, valine 242, histidine 243, glutamine 285, and glutamate 299 together coordinate ATP. In terms of domain architecture, ATP-grasp 1 spans 133–328 (RVAMQEIGLE…IAKIAAKLAV (196 aa)). Mg(2+)-binding residues include glutamine 285, glutamate 299, and asparagine 301. The Mn(2+) site is built by glutamine 285, glutamate 299, and asparagine 301. The tract at residues 404–554 (TGKVGLEPTG…YSTYEEECEA (151 aa)) is oligomerization domain. The interval 555–942 (APSDRRKIMI…AFARAQEAGD (388 aa)) is carbamoyl phosphate synthetic domain. One can recognise an ATP-grasp 2 domain in the interval 679 to 876 (QKLVQQLGLR…LAKIAARCMT (198 aa)). 10 residues coordinate ATP: arginine 715, arginine 754, leucine 756, glutamate 761, glycine 787, valine 788, histidine 789, serine 790, glutamine 830, and glutamate 847. 3 residues coordinate Mg(2+): glutamine 830, glutamate 847, and asparagine 849. The Mn(2+) site is built by glutamine 830, glutamate 847, and asparagine 849. Residues 943-1080 (IRAPQPGRAF…LQELHKELQV (138 aa)) form the MGS-like domain. The tract at residues 943–1080 (IRAPQPGRAF…LQELHKELQV (138 aa)) is allosteric domain.

It belongs to the CarB family. Composed of two chains; the small (or glutamine) chain promotes the hydrolysis of glutamine to ammonia, which is used by the large (or ammonia) chain to synthesize carbamoyl phosphate. Tetramer of heterodimers (alpha,beta)4. Mg(2+) is required as a cofactor. Requires Mn(2+) as cofactor.

The catalysed reaction is hydrogencarbonate + L-glutamine + 2 ATP + H2O = carbamoyl phosphate + L-glutamate + 2 ADP + phosphate + 2 H(+). The enzyme catalyses hydrogencarbonate + NH4(+) + 2 ATP = carbamoyl phosphate + 2 ADP + phosphate + 2 H(+). The protein operates within amino-acid biosynthesis; L-arginine biosynthesis; carbamoyl phosphate from bicarbonate: step 1/1. It participates in pyrimidine metabolism; UMP biosynthesis via de novo pathway; (S)-dihydroorotate from bicarbonate: step 1/3. Functionally, large subunit of the glutamine-dependent carbamoyl phosphate synthetase (CPSase). CPSase catalyzes the formation of carbamoyl phosphate from the ammonia moiety of glutamine, carbonate, and phosphate donated by ATP, constituting the first step of 2 biosynthetic pathways, one leading to arginine and/or urea and the other to pyrimidine nucleotides. The large subunit (synthetase) binds the substrates ammonia (free or transferred from glutamine from the small subunit), hydrogencarbonate and ATP and carries out an ATP-coupled ligase reaction, activating hydrogencarbonate by forming carboxy phosphate which reacts with ammonia to form carbamoyl phosphate. This is Carbamoyl phosphate synthase large chain from Xylella fastidiosa (strain 9a5c).